The sequence spans 274 residues: Large ribosomal subunit protein uL2 (274 aa).

2 disordered regions span residues 37-59 and 222-262; these read KAKNGGRNNNGRITTRHKGGGHK and GAAM…RTNK. Over residues 50 to 59 the composition is skewed to basic residues; it reads TTRHKGGGHK.

This sequence belongs to the universal ribosomal protein uL2 family. In terms of assembly, part of the 50S ribosomal subunit. Forms a bridge to the 30S subunit in the 70S ribosome.

In terms of biological role, one of the primary rRNA binding proteins. Required for association of the 30S and 50S subunits to form the 70S ribosome, for tRNA binding and peptide bond formation. It has been suggested to have peptidyltransferase activity; this is somewhat controversial. Makes several contacts with the 16S rRNA in the 70S ribosome. This chain is Large ribosomal subunit protein uL2, found in Alcanivorax borkumensis (strain ATCC 700651 / DSM 11573 / NCIMB 13689 / SK2).